A 206-amino-acid chain; its full sequence is Ras-related protein Ral-B (206 aa).

21–29 (GSGGVGKSA) contacts GTP. An Effector region motif is present at residues 43-51 (YEPTKADSY). Residues 68 to 72 (DTAGQ), 128 to 131 (NKSD), and 158 to 160 (SAK) contribute to the GTP site. The segment covering 180 to 189 (KMSENKDKNG) has biased composition (basic and acidic residues). Residues 180-206 (KMSENKDKNGKKSGKNKKSFKERCCLL) form a disordered region. Residue C203 is modified to Cysteine methyl ester. A lipid anchor (S-geranylgeranyl cysteine) is attached at C203. A propeptide spans 204 to 206 (CLL) (removed in mature form).

Belongs to the small GTPase superfamily. Ras family. In terms of assembly, interacts with EXOC2/Sec5 and EXOC8/Exo84. Interacts (via effector domain) with RALBP1. In terms of processing, prenylation is essential for membrane localization. Post-translationally, the farnesylated form confers resistance to the proapoptotic and anti-anchorage-dependent growth effects of some geranylgeranyltransferase I inhibitors.

The protein localises to the cell membrane. It is found in the midbody. It carries out the reaction GTP + H2O = GDP + phosphate + H(+). Its activity is regulated as follows. Alternates between an inactive form bound to GDP and an active form bound to GTP. Activated by a guanine nucleotide-exchange factor (GEF) and inactivated by a GTPase-activating protein (GAP). In terms of biological role, multifunctional GTPase involved in a variety of cellular processes including gene expression, cell migration, cell proliferation, oncogenic transformation and membrane trafficking. Accomplishes its multiple functions by interacting with distinct downstream effectors. Acts as a GTP sensor for GTP-dependent exocytosis of dense core vesicles. Required both to stabilize the assembly of the exocyst complex and to localize functional exocyst complexes to the leading edge of migrating cells. Required for suppression of apoptosis. In late stages of cytokinesis, upon completion of the bridge formation between dividing cells, mediates exocyst recruitment to the midbody to drive abscission. Involved in ligand-dependent receptor mediated endocytosis of the EGF and insulin receptors. The sequence is that of Ras-related protein Ral-B (RALB) from Macaca fascicularis (Crab-eating macaque).